We begin with the raw amino-acid sequence, 418 residues long: Equilibrative nucleotide transporter 6 (418 aa).

The next 11 membrane-spanning stretches (helical) occupy residues 19–39, 56–76, 86–106, 112–132, 142–162, 186–206, 264–284, 291–311, 326–346, 353–373, and 392–412; these read AMIVYCILGFGSLISWNSMLT, VLTLVYQPFAFGAIVILAYHE, LIGYILYTISTFLLIVLDLAT, FGPYTGLCAVVAAFGLADATV, LMCPELVQSYMGGMAVAGALT, MFLAISTCIELLSVMLYAYVL, HAVNLFLIYVCTLSIFPGFLY, GLGAWYALVLVAMYNCWDLVG, KLITIAVLSRYLLIPAFYFTA, WMIMLVSVLGLTNGHLTVCIM, and LVIFLLGGIFAGVALDWLWLI.

It belongs to the SLC29A/ENT transporter (TC 2.A.57) family. In terms of tissue distribution, expressed in leaves and siliques.

The protein localises to the cell membrane. In terms of biological role, nucleoside transporter that can mediate uptake of adenosine, uridine, guanosine or cytidine when expressed in a heterologous system (yeast). The sequence is that of Equilibrative nucleotide transporter 6 (ENT6) from Arabidopsis thaliana (Mouse-ear cress).